The following is a 253-amino-acid chain: Major prion protein (253 aa).

The N-terminal stretch at 1 to 22 (MANLGCWMLVLFVATWSNLGLC) is a signal peptide. The interaction with ADGRG6 stretch occupies residues 23–38 (KKRPKPGGWNTGGSRY). The interaction with GRB2, ERI3 and SYN1 stretch occupies residues 23 to 230 (KKRPKPGGWN…ESQAYYQRGS (208 aa)). A disordered region spans residues 25-108 (RPKPGGWNTG…WNKPSKPKTN (84 aa)). Repeat copies occupy residues 51–59 (PQGGGGWGQ), 60–67 (PHGGGWGQ), 68–75 (PHGGGWGQ), 76–83 (PHGGGWGQ), and 84–91 (PHGGGWGQ). Residues 51–91 (PQGGGGWGQPHGGGWGQPHGGGWGQPHGGGWGQPHGGGWGQ) form a 5 X 8 AA tandem repeats of P-H-G-G-G-W-G-Q region. A compositionally biased stretch (gly residues) spans 52 to 95 (QGGGGWGQPHGGGWGQPHGGGWGQPHGGGWGQPHGGGWGQGGGT). H61, G62, G63, H69, G70, G71, H77, G78, G79, H85, G86, and G87 together coordinate Cu(2+). A disulfide bond links C179 and C214. N-linked (GlcNAc...) asparagine glycans are attached at residues N181 and N197. S230 carries GPI-anchor amidated serine lipidation. Residues 231-253 (SMVLFSSPPVILLISFLIFLIVG) constitute a propeptide, removed in mature form.

It belongs to the prion family. In terms of assembly, monomer and homodimer. Has a tendency to aggregate into amyloid fibrils containing a cross-beta spine, formed by a steric zipper of superposed beta-strands. Soluble oligomers may represent an intermediate stage on the path to fibril formation. Copper binding may promote oligomerization. Interacts with GRB2, APP, ERI3/PRNPIP and SYN1. Mislocalized cytosolically exposed PrP interacts with MGRN1; this interaction alters MGRN1 subcellular location and causes lysosomal enlargement. Interacts with APP. Interacts with KIAA1191. Interacts with ADGRG6.

It localises to the cell membrane. Its subcellular location is the golgi apparatus. Its primary physiological function is unclear. May play a role in neuronal development and synaptic plasticity. May be required for neuronal myelin sheath maintenance. May promote myelin homeostasis through acting as an agonist for ADGRG6 receptor. May play a role in iron uptake and iron homeostasis. Soluble oligomers are toxic to cultured neuroblastoma cells and induce apoptosis (in vitro). Association with GPC1 (via its heparan sulfate chains) targets PRNP to lipid rafts. Also provides Cu(2+) or Zn(2+) for the ascorbate-mediated GPC1 deaminase degradation of its heparan sulfate side chains. The protein is Major prion protein (PRNP) of Pongo pygmaeus (Bornean orangutan).